The primary structure comprises 176 residues: MDLPGPIHDFLLVFLGSGLIVGGLGVVLLPNPIFSAFSLGFVLVCISLLYILANSHFVAAAQLLIYVGAINVLIIFAVMFMNDSEYFTDFNLWTVGDGITSLVCTTLLFSLISTILDTSWYGVIWTTRLNQILEQDLISNSQQIGSHLSTDFFLPFELISIILLVALIGAISVARQ.

The next 5 helical transmembrane spans lie at 10–30 (FLLV…VLLP), 33–53 (IFSA…YILA), 61–81 (AQLL…VMFM), 92–112 (LWTV…FSLI), and 152–172 (FFLP…GAIS).

The protein belongs to the complex I subunit 6 family. As to quaternary structure, NDH is composed of at least 16 different subunits, 5 of which are encoded in the nucleus.

The protein resides in the plastid. Its subcellular location is the chloroplast thylakoid membrane. It catalyses the reaction a plastoquinone + NADH + (n+1) H(+)(in) = a plastoquinol + NAD(+) + n H(+)(out). It carries out the reaction a plastoquinone + NADPH + (n+1) H(+)(in) = a plastoquinol + NADP(+) + n H(+)(out). In terms of biological role, NDH shuttles electrons from NAD(P)H:plastoquinone, via FMN and iron-sulfur (Fe-S) centers, to quinones in the photosynthetic chain and possibly in a chloroplast respiratory chain. The immediate electron acceptor for the enzyme in this species is believed to be plastoquinone. Couples the redox reaction to proton translocation, and thus conserves the redox energy in a proton gradient. The polypeptide is NAD(P)H-quinone oxidoreductase subunit 6, chloroplastic (ndhG) (Arabis hirsuta (Hairy rock-cress)).